The chain runs to 240 residues: Orotidine 5'-phosphate decarboxylase (240 aa).

Substrate-binding positions include D15, K37, 64 to 73 (DLKYHDIPNT), T125, R186, Q195, G215, and R216. The Proton donor role is filled by K66.

It belongs to the OMP decarboxylase family. Type 1 subfamily. As to quaternary structure, homodimer.

The enzyme catalyses orotidine 5'-phosphate + H(+) = UMP + CO2. It participates in pyrimidine metabolism; UMP biosynthesis via de novo pathway; UMP from orotate: step 2/2. Catalyzes the decarboxylation of orotidine 5'-monophosphate (OMP) to uridine 5'-monophosphate (UMP). The sequence is that of Orotidine 5'-phosphate decarboxylase from Pelobacter propionicus (strain DSM 2379 / NBRC 103807 / OttBd1).